The primary structure comprises 77 residues: Early E3 9.0 kDa glycoprotein (77 aa).

N-linked (GlcNAc...) asparagine; by host glycosylation occurs at asparagine 7. A helical transmembrane segment spans residues 27–47; it reads ITILIVIGILILSVILYFIFC.

It belongs to the adenoviridae E3A-1 family.

It is found in the host nucleus membrane. This is Early E3 9.0 kDa glycoprotein from Human adenovirus B serotype 3 (HAdV-3).